A 98-amino-acid polypeptide reads, in one-letter code: Putative pterin-4-alpha-carbinolamine dehydratase (98 aa).

It belongs to the pterin-4-alpha-carbinolamine dehydratase family.

It catalyses the reaction (4aS,6R)-4a-hydroxy-L-erythro-5,6,7,8-tetrahydrobiopterin = (6R)-L-erythro-6,7-dihydrobiopterin + H2O. The chain is Putative pterin-4-alpha-carbinolamine dehydratase from Chelativorans sp. (strain BNC1).